The primary structure comprises 365 residues: Histidinol-phosphate aminotransferase 2 (365 aa).

Lys-226 is subject to N6-(pyridoxal phosphate)lysine.

This sequence belongs to the class-II pyridoxal-phosphate-dependent aminotransferase family. Histidinol-phosphate aminotransferase subfamily. In terms of assembly, homodimer. Requires pyridoxal 5'-phosphate as cofactor.

It catalyses the reaction L-histidinol phosphate + 2-oxoglutarate = 3-(imidazol-4-yl)-2-oxopropyl phosphate + L-glutamate. The protein operates within amino-acid biosynthesis; L-histidine biosynthesis; L-histidine from 5-phospho-alpha-D-ribose 1-diphosphate: step 7/9. The protein is Histidinol-phosphate aminotransferase 2 (hisC2) of Pasteurella multocida (strain Pm70).